A 317-amino-acid polypeptide reads, in one-letter code: uncharacterized protein (317 aa).

It to A.aeolicus AA11 and AA34.

This is an uncharacterized protein from Aquifex aeolicus (strain VF5).